The sequence spans 122 residues: Large ribosomal subunit protein uL14c (122 aa).

It belongs to the universal ribosomal protein uL14 family. Part of the 50S ribosomal subunit.

Its subcellular location is the plastid. It is found in the chloroplast. Binds to 23S rRNA. This Pleurastrum terricola (Filamentous green alga) protein is Large ribosomal subunit protein uL14c.